The primary structure comprises 232 residues: MTEHTDFELLELATPYALNAVSDDERADIDRRVAAAPSPVAAAFNDEVRAVRETMAVVSAATTAEPPAHLRTAILDATKPEVRRQSRWRTAAFASAAAIAVGLGAFDLGVLTRPSPPPTVAEQVLTAPDVRTVSRPLGAGTATVVFSRDRNTGLLVMNNVAPPSRGTVYQMWLLGGAKGPRSAETMGTAAVTPSTTATLTDLGASTALAFTVEPGTGSPQPTGTILAELPLG.

Residues 1–90 (MTEHTDFELL…EVRRQSRWRT (90 aa)) are Cytoplasmic-facing. The helical transmembrane segment at 91-111 (AAFASAAAIAVGLGAFDLGVL) threads the bilayer. Residues 112-232 (TRPSPPPTVA…GTILAELPLG (121 aa)) are Extracellular-facing.

This sequence belongs to the anti-sigma-K factor family.

Its subcellular location is the cell membrane. In terms of biological role, an anti-sigma factor for extracytoplasmic function (ECF) sigma factor SigK. ECF sigma factors are held in an inactive form by an anti-sigma factor until released by regulated intramembrane proteolysis (RIP). However, in M.bovis this protein is probably dysfunctional, due to at least 1 of the 2 naturally occurring polymorphisms in its gene, when compared to M.tuberculosis. This leads to an increased expression of SigK-regulated genes, such as mpb70 and mpb83. RIP occurs when an extracytoplasmic signal triggers a concerted proteolytic cascade to transmit information and elicit cellular responses. The membrane-spanning regulatory substrate protein is first cut extracytoplasmically (site-1 protease, S1P), then within the membrane itself (site-2 protease, S2P, Rip1), while cytoplasmic proteases finish degrading the regulatory protein, liberating the sigma factor. This is Dysfunctional anti-sigma-K factor RskA (rskA) from Mycobacterium bovis (strain ATCC BAA-935 / AF2122/97).